A 156-amino-acid chain; its full sequence is Small ribosomal subunit protein uS7c (156 aa).

Belongs to the universal ribosomal protein uS7 family. As to quaternary structure, part of the 30S ribosomal subunit.

It localises to the plastid. Its subcellular location is the chloroplast. Its function is as follows. One of the primary rRNA binding proteins, it binds directly to 16S rRNA where it nucleates assembly of the head domain of the 30S subunit. The polypeptide is Small ribosomal subunit protein uS7c (rps7) (Cycas revoluta (Sago palm)).